We begin with the raw amino-acid sequence, 280 residues long: tRNA pseudouridine synthase A (280 aa).

The active-site Nucleophile is the Asp-55. Residue Tyr-110 coordinates substrate.

It belongs to the tRNA pseudouridine synthase TruA family.

It carries out the reaction uridine(38/39/40) in tRNA = pseudouridine(38/39/40) in tRNA. Its function is as follows. Formation of pseudouridine at positions 38, 39 and 40 in the anticodon stem and loop of transfer RNAs. The sequence is that of tRNA pseudouridine synthase A from Methanosphaerula palustris (strain ATCC BAA-1556 / DSM 19958 / E1-9c).